The following is a 203-amino-acid chain: Large ribosomal subunit protein bL25 (203 aa).

The protein belongs to the bacterial ribosomal protein bL25 family. CTC subfamily. Part of the 50S ribosomal subunit; part of the 5S rRNA/L5/L18/L25 subcomplex. Contacts the 5S rRNA. Binds to the 5S rRNA independently of L5 and L18.

In terms of biological role, this is one of the proteins that binds to the 5S RNA in the ribosome where it forms part of the central protuberance. The chain is Large ribosomal subunit protein bL25 from Xanthobacter autotrophicus (strain ATCC BAA-1158 / Py2).